Here is a 119-residue protein sequence, read N- to C-terminus: Secreted RxLR effector protein RXLR-C04 (119 aa).

The signal sequence occupies residues 1-22 (MRLSYIFVVVATIITNCDIASA). The short motif at 40 to 77 (RILRQTNDSDDLEPIRHAMLDMELLEKIAKDPKYAEEV) is the RxLR-dEER element. Asparagine 46 is a glycosylation site (N-linked (GlcNAc...) asparagine).

This sequence belongs to the RxLR effector family.

The protein localises to the secreted. It localises to the host cytoplasm. The protein resides in the host nucleus. Secreted effector that suppresses pattern-triggered immunity (PTI) in plant host. The sequence is that of Secreted RxLR effector protein RXLR-C04 from Plasmopara halstedii (Downy mildew of sunflower).